The primary structure comprises 602 residues: Myotubularin (602 aa).

The disordered stretch occupies residues 1 to 40 (MASSSASDCDAHPVERESMRKVSQDGVRQDMSKSGPRLPG). Positions 9–31 (CDAHPVERESMRKVSQDGVRQDM) are enriched in basic and acidic residues. Residue Ser-18 is modified to Phosphoserine. One can recognise a GRAM domain in the interval 28–97 (RQDMSKSGPR…GVISRIEKMG (70 aa)). Residues 163 to 538 (GWAIYNPVEE…RHLELWVNYY (376 aa)) enclose the Myotubularin phosphatase domain. A 1,2-diacyl-sn-glycero-3-phospho-(1D-myo-inositol-3,5-bisphosphate) contacts are provided by Asn-288, Asn-313, and Ile-314. Residues Asn-288, Asn-313, and Ile-314 each coordinate a 1,2-diacyl-sn-glycero-3-phospho-(1D-myo-inositol-3-phosphate). Catalysis depends on Cys-375, which acts as the Phosphocysteine intermediate. Residues Ser-376, Asp-377, Gly-378, Trp-379, Asp-380, Arg-381, Lys-417, and Arg-421 each contribute to the a 1,2-diacyl-sn-glycero-3-phospho-(1D-myo-inositol-3,5-bisphosphate) site. A 1,2-diacyl-sn-glycero-3-phospho-(1D-myo-inositol-3-phosphate)-binding residues include Ser-376, Asp-377, Gly-378, Trp-379, Asp-380, and Arg-381. Arg-421 serves as a coordination point for a 1,2-diacyl-sn-glycero-3-phospho-(1D-myo-inositol-3-phosphate). Residue Thr-495 is modified to Phosphothreonine. Residues 578 to 592 (PTKLTDSSTPPSGSA) show a composition bias toward polar residues. Residues 578-602 (PTKLTDSSTPPSGSAQIAPRMQTHF) are disordered.

The protein belongs to the protein-tyrosine phosphatase family. Non-receptor class myotubularin subfamily. In terms of assembly, heterodimer with MTMR12. Interacts with KMT2A/MLL1 (via SET domain). Interacts with DES in skeletal muscle but not in cardiac muscle. Interacts with SPEG.

It is found in the cytoplasm. Its subcellular location is the cell membrane. It localises to the cell projection. The protein localises to the filopodium. The protein resides in the ruffle. It is found in the late endosome. Its subcellular location is the myofibril. It localises to the sarcomere. It carries out the reaction a 1,2-diacyl-sn-glycero-3-phospho-(1D-myo-inositol-3-phosphate) + H2O = a 1,2-diacyl-sn-glycero-3-phospho-(1D-myo-inositol) + phosphate. The enzyme catalyses a 1,2-diacyl-sn-glycero-3-phospho-(1D-myo-inositol-3,5-bisphosphate) + H2O = a 1,2-diacyl-sn-glycero-3-phospho-(1D-myo-inositol-5-phosphate) + phosphate. The catalysed reaction is 1,2-dioctanoyl-sn-glycero-3-phospho-(1-D-myo-inositol-3-phosphate) + H2O = 1,2-dioctanoyl-sn-glycero-3-phospho-(1D-myo-inositol) + phosphate. It catalyses the reaction 1,2-dioctanoyl-sn-glycero-3-phospho-(1D-myo-inositol-3,5-bisphosphate) + H2O = 1,2-dioctanoyl-sn-glycero-3-phospho-(1D-myo-inositol-5-phosphate) + phosphate. It carries out the reaction 1,2-dihexadecanoyl-sn-glycero-3-phospho-(1D-myo-inositol-3,5-phosphate) + H2O = 1,2-dihexadecanoyl-sn-glycero-3-phospho-(1D-myo-inositol-5-phosphate) + phosphate. Its activity is regulated as follows. Allosterically activated by phosphatidylinositol 5-phosphate (PI5P). Lipid phosphatase which dephosphorylates phosphatidylinositol 3-monophosphate (PI3P) and phosphatidylinositol 3,5-bisphosphate (PI(3,5)P2). Has also been shown to dephosphorylate phosphotyrosine- and phosphoserine-containing peptides. Negatively regulates EGFR degradation through regulation of EGFR trafficking from the late endosome to the lysosome. Plays a role in vacuolar formation and morphology. Regulates desmin intermediate filament assembly and architecture. Plays a role in mitochondrial morphology and positioning. Required for skeletal muscle maintenance but not for myogenesis. In skeletal muscles, stabilizes MTMR12 protein levels. This chain is Myotubularin, found in Rattus norvegicus (Rat).